A 318-amino-acid polypeptide reads, in one-letter code: Porphobilinogen deaminase (318 aa).

Position 241 is an S-(dipyrrolylmethanemethyl)cysteine (Cys-241).

This sequence belongs to the HMBS family. In terms of assembly, monomer. The cofactor is dipyrromethane.

It carries out the reaction 4 porphobilinogen + H2O = hydroxymethylbilane + 4 NH4(+). The protein operates within porphyrin-containing compound metabolism; protoporphyrin-IX biosynthesis; coproporphyrinogen-III from 5-aminolevulinate: step 2/4. In terms of biological role, tetrapolymerization of the monopyrrole PBG into the hydroxymethylbilane pre-uroporphyrinogen in several discrete steps. This is Porphobilinogen deaminase from Geotalea daltonii (strain DSM 22248 / JCM 15807 / FRC-32) (Geobacter daltonii).